The sequence spans 159 residues: Putative ribosomal RNA large subunit methyltransferase H (159 aa).

Residues leucine 76, glycine 108, and 127-132 contribute to the S-adenosyl-L-methionine site; that span reads LSPLTF.

Belongs to the RNA methyltransferase RlmH family.

It localises to the cytoplasm. It catalyses the reaction pseudouridine(1915) in 23S rRNA + S-adenosyl-L-methionine = N(3)-methylpseudouridine(1915) in 23S rRNA + S-adenosyl-L-homocysteine + H(+). Specifically methylates the pseudouridine at position 1915 (m3Psi1915) in 23S rRNA. The polypeptide is Putative ribosomal RNA large subunit methyltransferase H (Methanoregula boonei (strain DSM 21154 / JCM 14090 / 6A8)).